Reading from the N-terminus, the 330-residue chain is uncharacterized protein (330 aa).

This sequence belongs to the ornithine cyclodeaminase/mu-crystallin family.

It localises to the cytoplasm. This is an uncharacterized protein from Schizosaccharomyces pombe (strain 972 / ATCC 24843) (Fission yeast).